We begin with the raw amino-acid sequence, 541 residues long: Phosphoenolpyruvate carboxykinase (ATP) (541 aa).

Residue 243–250 (GLSGTGKT) coordinates ATP.

It belongs to the phosphoenolpyruvate carboxykinase (ATP) family.

It carries out the reaction oxaloacetate + ATP = phosphoenolpyruvate + ADP + CO2. The protein operates within carbohydrate biosynthesis; gluconeogenesis. The protein is Phosphoenolpyruvate carboxykinase (ATP) (PCK1) of Eremothecium gossypii (strain ATCC 10895 / CBS 109.51 / FGSC 9923 / NRRL Y-1056) (Yeast).